A 322-amino-acid polypeptide reads, in one-letter code: Malate dehydrogenase (322 aa).

Residues 10-15 and aspartate 34 each bind NAD(+); that span reads GSGQIG. Substrate is bound by residues arginine 83 and arginine 89. NAD(+) contacts are provided by residues asparagine 96 and 119 to 121; that span reads ITN. Residues asparagine 121 and arginine 152 each coordinate substrate. The active-site Proton acceptor is histidine 176.

It belongs to the LDH/MDH superfamily. MDH type 3 family.

It catalyses the reaction (S)-malate + NAD(+) = oxaloacetate + NADH + H(+). In terms of biological role, catalyzes the reversible oxidation of malate to oxaloacetate. This Bradyrhizobium diazoefficiens (strain JCM 10833 / BCRC 13528 / IAM 13628 / NBRC 14792 / USDA 110) protein is Malate dehydrogenase.